A 135-amino-acid polypeptide reads, in one-letter code: T-cell receptor beta chain V region 3H.25 (135 aa).

An N-terminal signal peptide occupies residues 1–20 (MATRLLCYTVLCLLGARILN). Positions 21–115 (SKVIQTPRYL…SALYLCASSL (95 aa)) are v segment. An intrachain disulfide couples Cys-42 to Cys-111. A d segment region spans residues 116–118 (FGT). The interval 119–135 (SDYTFGSGTRLLVIGKA) is j segment.

This chain is T-cell receptor beta chain V region 3H.25, found in Mus musculus (Mouse).